The primary structure comprises 202 residues: Putative 3-methyladenine DNA glycosylase (202 aa).

Belongs to the DNA glycosylase MPG family.

This Staphylococcus aureus (strain Mu3 / ATCC 700698) protein is Putative 3-methyladenine DNA glycosylase.